The primary structure comprises 214 residues: Cell division protein SepF (214 aa).

The disordered stretch occupies residues 23-70 (YYDDRAPSRGFPRPRFDDGYGRYDGDDYDDPRREPADCPPPAGYRGGY). Residues 36-58 (PRFDDGYGRYDGDDYDDPRREPA) show a composition bias toward basic and acidic residues.

The protein belongs to the SepF family. Homodimer. Interacts with FtsZ.

It localises to the cytoplasm. Its function is as follows. Cell division protein that is part of the divisome complex and is recruited early to the Z-ring. Probably stimulates Z-ring formation, perhaps through the cross-linking of FtsZ protofilaments. Its function overlaps with FtsA. This Mycolicibacterium paratuberculosis (strain ATCC BAA-968 / K-10) (Mycobacterium paratuberculosis) protein is Cell division protein SepF.